The sequence spans 403 residues: Queuine tRNA-ribosyltransferase catalytic subunit 1 (403 aa).

Position 2 is an N-acetylalanine (alanine 2). Residue aspartate 105 is the Proton acceptor of the active site. 105-109 (DSGGF) contacts queuine. Serine 139 bears the Phosphoserine mark. Residues aspartate 159, glutamine 202, and glycine 229 each contribute to the queuine site. Positions 260-266 (GVGYATD) are RNA binding. Aspartate 279 serves as the catalytic Nucleophile. An RNA binding; important for wobble base 34 recognition region spans residues 284–288 (TRTAR). Residues cysteine 317, cysteine 319, cysteine 322, and histidine 348 each coordinate Zn(2+).

Belongs to the queuine tRNA-ribosyltransferase family. As to quaternary structure, heterodimer of a catalytic subunit QTRT1 and an accessory subunit QTRT2. Zn(2+) serves as cofactor.

Its subcellular location is the cytoplasm. The protein resides in the mitochondrion outer membrane. The enzyme catalyses guanosine(34) in tRNA + queuine = queuosine(34) in tRNA + guanine. Catalytic subunit of the queuine tRNA-ribosyltransferase (TGT) that catalyzes the base-exchange of a guanine (G) residue with queuine (Q) at position 34 (anticodon wobble position) in tRNAs with GU(N) anticodons (tRNA-Asp, -Asn, -His and -Tyr), resulting in the hypermodified nucleoside queuosine (7-(((4,5-cis-dihydroxy-2-cyclopenten-1-yl)amino)methyl)-7-deazaguanosine). Catalysis occurs through a double-displacement mechanism. The nucleophile active site attacks the C1' of nucleotide 34 to detach the guanine base from the RNA, forming a covalent enzyme-RNA intermediate. The proton acceptor active site deprotonates the incoming queuine, allowing a nucleophilic attack on the C1' of the ribose to form the product. The polypeptide is Queuine tRNA-ribosyltransferase catalytic subunit 1 (Rattus norvegicus (Rat)).